A 239-amino-acid chain; its full sequence is Ribonuclease PH (239 aa).

Phosphate is bound by residues Arg-86 and 124-126; that span reads GTR.

Belongs to the RNase PH family. Homohexameric ring arranged as a trimer of dimers.

The catalysed reaction is tRNA(n+1) + phosphate = tRNA(n) + a ribonucleoside 5'-diphosphate. Phosphorolytic 3'-5' exoribonuclease that plays an important role in tRNA 3'-end maturation. Removes nucleotide residues following the 3'-CCA terminus of tRNAs; can also add nucleotides to the ends of RNA molecules by using nucleoside diphosphates as substrates, but this may not be physiologically important. Probably plays a role in initiation of 16S rRNA degradation (leading to ribosome degradation) during starvation. This chain is Ribonuclease PH, found in Rhizobium etli (strain CIAT 652).